The chain runs to 65 residues: Large ribosomal subunit protein bL35 (65 aa).

Belongs to the bacterial ribosomal protein bL35 family.

In Prochlorococcus marinus (strain MIT 9313), this protein is Large ribosomal subunit protein bL35.